Consider the following 379-residue polypeptide: uncharacterized protein (379 aa).

This sequence belongs to the glycosyltransferase 28 family.

This is an uncharacterized protein from Methanosarcina acetivorans (strain ATCC 35395 / DSM 2834 / JCM 12185 / C2A).